A 534-amino-acid chain; its full sequence is Steroid hormone receptor family member cnr14 (534 aa).

2 disordered regions span residues 30-53 (SGKT…QWSH) and 119-139 (PATS…GHTT). Residues 119 to 130 (PATSVTSSLSPP) are compositionally biased toward low complexity. The nuclear receptor DNA-binding region spans 148-223 (ISFCKVCGDK…SGMSKDSVRQ (76 aa)). NR C4-type zinc fingers lie at residues 151–171 (CKVC…CEGC) and 187–211 (CLKQ…FKKC). Positions 252 to 493 (EVDAVYEAVL…PPLVVEMFQL (242 aa)) constitute an NR LBD domain. The tract at residues 502–534 (HNNQENQYTPAPEHQSPQPQQPTPNQQQTPVHC) is disordered. Residues 511–534 (PAPEHQSPQPQQPTPNQQQTPVHC) show a composition bias toward low complexity.

This sequence belongs to the nuclear hormone receptor family. NR1 subfamily. In terms of tissue distribution, most abundant in embryos.

It is found in the nucleus. Functionally, transcriptional regulator which is involved in the sex determination and X chromosome dosage compensation pathways. Directly binds to five 5'-A(G/C)(G/T)(T/G)C(A/G)-3' sites in the promoter of sex-determining factor xol-1 to negatively regulate its expression and promote hermaphrodite development. Together with fox-1 is involved in making the distinction between one and two X-chromosomes. Plays a role in the fox-1-mediated repression of the functionally active isoform (isoform b) of the sex-determining factor xol-1 gene to promote hermaphrodite development. Plays a role in the association of the dosage compensation complex proteins dpy-27 and sdc-3 with the hermaphrodite X chromosomes. The protein is Steroid hormone receptor family member cnr14 of Caenorhabditis elegans.